Here is an 8515-residue protein sequence, read N- to C-terminus: Nonribosomal peptide synthetase 8 (8515 aa).

2 adenylation regions span residues 59-736 (REHH…YRCS) and 1163-1705 (AKLS…EWVE). A condensation 1 region spans residues 587–1159 (RRVVQWLENL…TVGEVALVGD (573 aa)). Residues 615–691 (EPETAMERRL…ELAPRVKVAE (77 aa)) form the Carrier 1 domain. Ser652 carries the post-translational modification O-(pantetheine 4'-phosphoryl)serine. The Carrier 2 domain maps to 1732-1808 (RGLTPTETVI…KLGRHADHSS (77 aa)). Ser1769 carries the post-translational modification O-(pantetheine 4'-phosphoryl)serine. The interval 1830–2273 (LSPIQQWFFE…TLYDCPLAAL (444 aa)) is epimerase 1. Residues 2301-2709 (SHIQEGILLS…RSPEAVLHDL (409 aa)) are condensation 2. Residues 2733 to 3266 (QCLHWLIEQW…RMILSWLSEP (534 aa)) are adenylation 3. The Carrier 3 domain maps to 3286 to 3362 (TTLGPVEKQM…KVTPRTISLS (77 aa)). Ser3323 bears the O-(pantetheine 4'-phosphoryl)serine mark. Residues 3406–3819 (SPMQEGILLA…DNSGCSVKTV (414 aa)) are condensation 3. Positions 3857–3933 (EPTNLIALTV…EVFEHARFSD (77 aa)) constitute a Carrier 4 domain. Ser3894 is modified (O-(pantetheine 4'-phosphoryl)serine). Residues 3953–4392 (LSPIQKLHFH…TPSDFQLLSL (440 aa)) form an epimerase 2 region. The condensation 4 stretch occupies residues 4420–4823 (PCSPMQEGIL…ARPRARLGTI (404 aa)). Residues 4837 to 5363 (WNEQARRPVV…RKVNKWLESF (527 aa)) are adenylation 4. The Carrier 5 domain occupies 5385–5461 (PPLTPIQQTI…SLAACATAII (77 aa)). Ser5422 is subject to O-(pantetheine 4'-phosphoryl)serine. Residues 5508 to 5923 (SPMQEGILFS…SLVDHLSLCS (416 aa)) form a condensation 5 region. Residues 5941 to 6459 (ELRQCLHELI…GKVDRQALRR (519 aa)) form an adenylation 5 region. The region spanning 6482–6558 (PISTAEEQQM…DLATLLESPA (77 aa)) is the Carrier 6 domain. Ser6519 is modified (O-(pantetheine 4'-phosphoryl)serine). Residues 6606-6992 (CTPLQESLMA…SQMKSVMGTL (387 aa)) are condensation 6. Residues 7030–7544 (VEDLIISRAQ…SSGKLARKGV (515 aa)) form an adenylation 6 region. Residues 7575 to 7651 (IASSSVERAI…HLASREDLTA (77 aa)) enclose the Carrier 7 domain. O-(pantetheine 4'-phosphoryl)serine is present on Ser7612. Positions 7670-8119 (LTPIQRFFFC…DYPRARLDYT (450 aa)) are epimerase 3. The interval 8164–8504 (HFIWKIAGTK…DPTSPLQFAD (341 aa)) is condensation 7. Polar residues predominate over residues 8488–8500 (AVNSVSSDPTSPL). The disordered stretch occupies residues 8488–8515 (AVNSVSSDPTSPLQFADGQDPMPVSHQP).

It belongs to the NRP synthetase family.

In terms of biological role, nonribosomal peptide synthesis (NRPS) is a key mechanism responsible for the biosynthesis of bioactive metabolites which are potentially contributing to organismal virulence. However, contarary to other nonribosomal peptide synthases, NRPS8 does not encode a secreted peptide, but has more a structural role since it is involved in germ tube formation. In Aspergillus fumigatus (strain ATCC MYA-4609 / CBS 101355 / FGSC A1100 / Af293) (Neosartorya fumigata), this protein is Nonribosomal peptide synthetase 8 (NRPS8).